Consider the following 624-residue polypeptide: Altered inheritance of mitochondria protein 9, mitochondrial (624 aa).

Residues 1-34 (MLSRVARCSRTLNQVTRNGQSGLFSAVLRTSIRQ) constitute a mitochondrion transit peptide.

It belongs to the AIM9 family.

It is found in the mitochondrion. This is Altered inheritance of mitochondria protein 9, mitochondrial (AIM9) from Candida albicans (strain WO-1) (Yeast).